The chain runs to 283 residues: S-methyl-5'-thioadenosine phosphorylase (283 aa).

Phosphate is bound at residue Thr-18. An N6-acetyllysine modification is found at Lys-51. Phosphate is bound by residues 60–61 (RH) and 93–94 (TA). Met-196 is a substrate binding site. Thr-197 lines the phosphate pocket. Residue 220-222 (DYD) coordinates substrate.

The protein belongs to the PNP/MTAP phosphorylase family. MTAP subfamily. As to quaternary structure, homotrimer.

The protein resides in the cytoplasm. Its subcellular location is the nucleus. The enzyme catalyses S-methyl-5'-thioadenosine + phosphate = 5-(methylsulfanyl)-alpha-D-ribose 1-phosphate + adenine. The protein operates within amino-acid biosynthesis; L-methionine biosynthesis via salvage pathway; S-methyl-5-thio-alpha-D-ribose 1-phosphate from S-methyl-5'-thioadenosine (phosphorylase route): step 1/1. Functionally, catalyzes the reversible phosphorylation of S-methyl-5'-thioadenosine (MTA) to adenine and 5-methylthioribose-1-phosphate. Involved in the breakdown of MTA, a major by-product of polyamine biosynthesis. Responsible for the first step in the methionine salvage pathway after MTA has been generated from S-adenosylmethionine. Has broad substrate specificity with 6-aminopurine nucleosides as preferred substrates. The polypeptide is S-methyl-5'-thioadenosine phosphorylase (Mtap) (Mus musculus (Mouse)).